The primary structure comprises 347 residues: MDNDRQKALDTVIKNMEKSFGKGAVMKLGDNIGRRVSTTSTGSVTLDNALGVGGYPKGRIIEIYGPESSGKTTVALHAIAEVQSNGGVAAFIDAEHALDPEYAQALGVDIDNLYLSQPDHGEQGLEIAEAFVRSGAVDIVVVDSVAALTPKAEIEGEMGDTHVGLQARLMSQALRKLSGAISKSNTTAIFINQIREKVGVMFGNPETTPGGRALKFYSSVRLEVRRAEQLKQGQEIVGNRTKIKVVKNKVAPPFRVAEVDIMYGQGISKEGELIDLGVENDIVDKSGAWYSYNGERMGQGKENVKMYLKENPQIKEEIDRKLREKLGISDGDVEETEDAPKSLFDEE.

65–72 contributes to the ATP binding site; that stretch reads GPESSGKT. The segment at 325–347 is disordered; that stretch reads KLGISDGDVEETEDAPKSLFDEE. The segment covering 338–347 has biased composition (basic and acidic residues); that stretch reads DAPKSLFDEE.

The protein belongs to the RecA family.

The protein resides in the cytoplasm. Can catalyze the hydrolysis of ATP in the presence of single-stranded DNA, the ATP-dependent uptake of single-stranded DNA by duplex DNA, and the ATP-dependent hybridization of homologous single-stranded DNAs. It interacts with LexA causing its activation and leading to its autocatalytic cleavage. This chain is Protein RecA, found in Staphylococcus aureus (strain Mu3 / ATCC 700698).